Here is a 129-residue protein sequence, read N- to C-terminus: Small ribosomal subunit protein uS8 (129 aa).

It belongs to the universal ribosomal protein uS8 family. As to quaternary structure, part of the 30S ribosomal subunit.

Functionally, one of the primary rRNA binding proteins, it binds directly to 16S rRNA central domain where it helps coordinate assembly of the platform of the 30S subunit. The chain is Small ribosomal subunit protein uS8 from Picrophilus torridus (strain ATCC 700027 / DSM 9790 / JCM 10055 / NBRC 100828 / KAW 2/3).